A 126-amino-acid polypeptide reads, in one-letter code: Fluoride-specific ion channel FluC (126 aa).

Helical transmembrane passes span 4–24 (SILA…FLGI), 35–55 (LGTF…VAGF), 68–88 (FVIT…AEVV), and 103–123 (IVIH…TVSL). Na(+) is bound by residues glycine 75 and serine 78.

It belongs to the fluoride channel Fluc/FEX (TC 1.A.43) family.

The protein localises to the cell inner membrane. The catalysed reaction is fluoride(in) = fluoride(out). Its activity is regulated as follows. Na(+) is not transported, but it plays an essential structural role and its presence is essential for fluoride channel function. In terms of biological role, fluoride-specific ion channel. Important for reducing fluoride concentration in the cell, thus reducing its toxicity. The sequence is that of Fluoride-specific ion channel FluC from Paraburkholderia xenovorans (strain LB400).